Consider the following 81-residue polypeptide: HssA/B-like protein 5 (81 aa).

This sequence belongs to the hssA/B family.

This chain is HssA/B-like protein 5 (hssl5), found in Dictyostelium discoideum (Social amoeba).